Reading from the N-terminus, the 87-residue chain is U3-theraphotoxin-Hhn1a 2 (87 aa).

The N-terminal stretch at Met1–Ala24 is a signal peptide. The propeptide occupies Ser25–Arg52. 3 disulfide bridges follow: Cys54-Cys67, Cys61-Cys72, and Cys66-Cys79.

Belongs to the neurotoxin 10 (Hwtx-1) family. 51 (Hntx-8) subfamily. Hntx-8 sub-subfamily. Expressed by the venom gland.

It localises to the secreted. Functionally, ion channel inhibitor. In Cyriopagopus hainanus (Chinese bird spider), this protein is U3-theraphotoxin-Hhn1a 2.